Reading from the N-terminus, the 248-residue chain is Ribosomal RNA small subunit methyltransferase J (248 aa).

S-adenosyl-L-methionine is bound by residues 98–99 (RD), 114–115 (ER), 150–151 (SS), and Asp-168.

The protein belongs to the methyltransferase superfamily. RsmJ family.

The protein resides in the cytoplasm. It carries out the reaction guanosine(1516) in 16S rRNA + S-adenosyl-L-methionine = N(2)-methylguanosine(1516) in 16S rRNA + S-adenosyl-L-homocysteine + H(+). Specifically methylates the guanosine in position 1516 of 16S rRNA. The chain is Ribosomal RNA small subunit methyltransferase J from Shewanella baltica (strain OS195).